We begin with the raw amino-acid sequence, 145 residues long: Nickel-responsive regulator (145 aa).

Positions 77, 88, 90, and 96 each coordinate Ni(2+).

This sequence belongs to the transcriptional regulatory CopG/NikR family. In terms of assembly, homotetramer. Ni(2+) serves as cofactor.

Functionally, transcriptional repressor of the nikABCDE operon. Is active in the presence of excessive concentrations of intracellular nickel. This Edwardsiella ictaluri (strain 93-146) protein is Nickel-responsive regulator.